The sequence spans 283 residues: Flagellar filament 35 kDa core protein (283 aa).

It belongs to the bacterial flagellin family. In terms of assembly, the flagellum consists of two outer layers around a core that contains several antigenically related polypeptides.

It localises to the periplasmic flagellum. Its subcellular location is the periplasm. Functionally, component of the core of the flagella. The polypeptide is Flagellar filament 35 kDa core protein (flaB) (Leptospira interrogans serogroup Icterohaemorrhagiae serovar Lai (strain 56601)).